The primary structure comprises 225 residues: PKHD-type hydroxylase YbiX (225 aa).

The Fe2OG dioxygenase domain occupies threonine 78–serine 177. Fe cation is bound by residues histidine 96, aspartate 98, and histidine 158. Arginine 168 serves as a coordination point for 2-oxoglutarate.

Requires Fe(2+) as cofactor. L-ascorbate is required as a cofactor.

The chain is PKHD-type hydroxylase YbiX from Escherichia coli O8 (strain IAI1).